Consider the following 105-residue polypeptide: MICOS complex subunit Mic10 (105 aa).

A helical transmembrane segment spans residues 29–46 (LLKVTGGVAIGIVASVAF). The Mitochondrial intermembrane portion of the chain corresponds to 47–105 (FKSRSWPIWFGSGVGLGTGWSNCRHDFASPYVLHGKRVPAGQDSQGKPAYNIITEQHKQ). Residues 85-105 (PAGQDSQGKPAYNIITEQHKQ) are disordered.

This sequence belongs to the MICOS complex subunit Mic10 family. In terms of assembly, component of the mitochondrial contact site and cristae organizing system (MICOS) complex.

It is found in the mitochondrion inner membrane. Functionally, component of the MICOS complex, a large protein complex of the mitochondrial inner membrane that plays crucial roles in the maintenance of crista junctions, inner membrane architecture, and formation of contact sites to the outer membrane. In Caenorhabditis elegans, this protein is MICOS complex subunit Mic10.